The chain runs to 159 residues: Protein A40 (159 aa).

Topologically, residues 1 to 9 (MNKHKTDYA) are cytoplasmic. Residues 10-30 (GYACCVICGLIVGIIFTATLL) traverse the membrane as a helical; Signal-anchor for type II membrane protein segment. At 31–159 (KVVERKLVHT…TPKLHSCYTI (129 aa)) the chain is on the extracellular side. Residues 63–159 (YNNKCIHLST…TPKLHSCYTI (97 aa)) enclose the C-type lectin domain.

Belongs to the poxviridae A40 protein family.

The protein localises to the host membrane. The sequence is that of Protein A40 from Bos taurus (Bovine).